The sequence spans 351 residues: Ion-translocating oxidoreductase complex subunit D (351 aa).

4 consecutive transmembrane segments (helical) span residues 18-38 (IMLL…YFFG), 40-60 (GSLI…GAVL), 87-107 (LPPL…IVIA), and 121-141 (PAMV…TSWL). The residue at position 185 (threonine 185) is an FMN phosphoryl threonine. Transmembrane regions (helical) follow at residues 211 to 231 (VLAG…GLLL), 241 to 261 (IPVS…MIAP), 264 to 284 (FASP…FFIA), 298 to 318 (LIFG…GGYP), and 321 to 341 (VAFA…YTQP).

The protein belongs to the NqrB/RnfD family. As to quaternary structure, the complex is composed of six subunits: RnfA, RnfB, RnfC, RnfD, RnfE and RnfG. It depends on FMN as a cofactor.

The protein localises to the cell inner membrane. Its function is as follows. Part of a membrane-bound complex that couples electron transfer with translocation of ions across the membrane. The sequence is that of Ion-translocating oxidoreductase complex subunit D from Yersinia pestis.